The following is a 453-amino-acid chain: Phosphoglucosamine mutase (453 aa).

S105 (phosphoserine intermediate) is an active-site residue. Positions 105, 244, 246, and 248 each coordinate Mg(2+). S105 carries the phosphoserine modification.

This sequence belongs to the phosphohexose mutase family. It depends on Mg(2+) as a cofactor. Post-translationally, activated by phosphorylation.

It catalyses the reaction alpha-D-glucosamine 1-phosphate = D-glucosamine 6-phosphate. Catalyzes the conversion of glucosamine-6-phosphate to glucosamine-1-phosphate. The protein is Phosphoglucosamine mutase of Chromohalobacter salexigens (strain ATCC BAA-138 / DSM 3043 / CIP 106854 / NCIMB 13768 / 1H11).